Here is a 274-residue protein sequence, read N- to C-terminus: Thiamine kinase (274 aa).

This sequence belongs to the thiamine kinase family.

The enzyme catalyses thiamine + ATP = thiamine phosphate + ADP + H(+). It participates in cofactor biosynthesis; thiamine diphosphate biosynthesis; thiamine phosphate from thiamine: step 1/1. Functionally, catalyzes the ATP-dependent phosphorylation of thiamine to thiamine phosphate. Is involved in thiamine salvage. This Shigella boydii serotype 4 (strain Sb227) protein is Thiamine kinase.